Here is a 225-residue protein sequence, read N- to C-terminus: NAD(P)H-quinone oxidoreductase subunit K, chloroplastic (225 aa).

4 residues coordinate [4Fe-4S] cluster: cysteine 43, cysteine 44, cysteine 108, and cysteine 139.

This sequence belongs to the complex I 20 kDa subunit family. As to quaternary structure, NDH is composed of at least 16 different subunits, 5 of which are encoded in the nucleus. [4Fe-4S] cluster serves as cofactor.

The protein resides in the plastid. It localises to the chloroplast thylakoid membrane. The catalysed reaction is a plastoquinone + NADH + (n+1) H(+)(in) = a plastoquinol + NAD(+) + n H(+)(out). The enzyme catalyses a plastoquinone + NADPH + (n+1) H(+)(in) = a plastoquinol + NADP(+) + n H(+)(out). Functionally, NDH shuttles electrons from NAD(P)H:plastoquinone, via FMN and iron-sulfur (Fe-S) centers, to quinones in the photosynthetic chain and possibly in a chloroplast respiratory chain. The immediate electron acceptor for the enzyme in this species is believed to be plastoquinone. Couples the redox reaction to proton translocation, and thus conserves the redox energy in a proton gradient. This is NAD(P)H-quinone oxidoreductase subunit K, chloroplastic from Lolium perenne (Perennial ryegrass).